A 566-amino-acid chain; its full sequence is CTP synthase (566 aa).

The tract at residues 1-265 is amidoligase domain; that stretch reads MTKYVFVTGG…DEIVCHKLNL (265 aa). Ser-13 is a CTP binding site. UTP is bound at residue Ser-13. Residues 14–19 and Asp-71 contribute to the ATP site; that span reads SLGKGI. Mg(2+)-binding residues include Asp-71 and Glu-139. CTP is bound by residues 146-148, 186-191, and Lys-222; these read DIE and KTKPTQ. UTP-binding positions include 186–191 and Lys-222; that span reads KTKPTQ. The region spanning 290–543 is the Glutamine amidotransferase type-1 domain; that stretch reads EIALVGKYVD…IEAAAVFADK (254 aa). Residue Gly-351 participates in L-glutamine binding. Cys-378 functions as the Nucleophile; for glutamine hydrolysis in the catalytic mechanism. L-glutamine-binding positions include 379–382, Glu-402, and Arg-469; that span reads LGMQ. Residues His-516 and Glu-518 contribute to the active site. A disordered region spans residues 545–566; the sequence is PSSEGAISADKPERTTTGAYIQ.

Belongs to the CTP synthase family. As to quaternary structure, homotetramer.

The enzyme catalyses UTP + L-glutamine + ATP + H2O = CTP + L-glutamate + ADP + phosphate + 2 H(+). The catalysed reaction is L-glutamine + H2O = L-glutamate + NH4(+). It carries out the reaction UTP + NH4(+) + ATP = CTP + ADP + phosphate + 2 H(+). The protein operates within pyrimidine metabolism; CTP biosynthesis via de novo pathway; CTP from UDP: step 2/2. Allosterically activated by GTP, when glutamine is the substrate; GTP has no effect on the reaction when ammonia is the substrate. The allosteric effector GTP functions by stabilizing the protein conformation that binds the tetrahedral intermediate(s) formed during glutamine hydrolysis. Inhibited by the product CTP, via allosteric rather than competitive inhibition. Catalyzes the ATP-dependent amination of UTP to CTP with either L-glutamine or ammonia as the source of nitrogen. Regulates intracellular CTP levels through interactions with the four ribonucleotide triphosphates. The protein is CTP synthase of Nitrosospira multiformis (strain ATCC 25196 / NCIMB 11849 / C 71).